Reading from the N-terminus, the 639-residue chain is UvrABC system protein C (639 aa).

A compositionally biased stretch (acidic residues) spans 1–16 (MTDLPVDEPDRDDGAD). The interval 1 to 28 (MTDLPVDEPDRDDGADQPDAGADPATPR) is disordered. Positions 17 to 27 (QPDAGADPATP) are enriched in low complexity. Positions 42–120 (SSPGVYRMID…IKKLKPRYNI (79 aa)) constitute a GIY-YIG domain. The UVR domain occupies 230 to 265 (KALQHDLAKRMDEAAQALDYEQAAIFRDRIKALTNV).

This sequence belongs to the UvrC family. Interacts with UvrB in an incision complex.

It localises to the cytoplasm. Its function is as follows. The UvrABC repair system catalyzes the recognition and processing of DNA lesions. UvrC both incises the 5' and 3' sides of the lesion. The N-terminal half is responsible for the 3' incision and the C-terminal half is responsible for the 5' incision. In Rhodospirillum rubrum (strain ATCC 11170 / ATH 1.1.1 / DSM 467 / LMG 4362 / NCIMB 8255 / S1), this protein is UvrABC system protein C.